We begin with the raw amino-acid sequence, 121 residues long: Large ribosomal subunit protein bL12 (121 aa).

The protein belongs to the bacterial ribosomal protein bL12 family. Homodimer. Part of the ribosomal stalk of the 50S ribosomal subunit. Forms a multimeric L10(L12)X complex, where L10 forms an elongated spine to which 2 to 4 L12 dimers bind in a sequential fashion. Binds GTP-bound translation factors.

In terms of biological role, forms part of the ribosomal stalk which helps the ribosome interact with GTP-bound translation factors. Is thus essential for accurate translation. This is Large ribosomal subunit protein bL12 from Xanthomonas axonopodis pv. citri (strain 306).